A 79-amino-acid polypeptide reads, in one-letter code: Conotoxin Cl9.4 (79 aa).

A signal peptide spans 1–23 (MNCYLILTVALLLTSAMTGTTTA). The propeptide occupies 24–37 (GQLNKKGVTLREDD). 3 cysteine pairs are disulfide-bonded: Cys-41–Cys-58, Cys-46–Cys-68, and Cys-48–Cys-73.

As to expression, expressed by the venom duct.

Its subcellular location is the secreted. The sequence is that of Conotoxin Cl9.4 from Californiconus californicus (California cone).